The following is a 613-amino-acid chain: Probable potassium transport system protein Kup 1 (613 aa).

A run of 12 helical transmembrane segments spans residues 40–60 (VLSMLFWSMTLVVSIKYVVFV), 93–113 (MLLGLLGASMFYGDAVITPAI), 127–147 (PALQPWVLPLSLIVLVGLFLL), 158–178 (LFGPVMLFWFVLLGLIGLFSV), 201–221 (AVQAFIVFGSVFLALTGAEAL), 237–257 (WFYIAMPCLLLNYFGQGALLL), 266–286 (PFFLLMPTWAVAPTIVLATAA), 288–308 (VIASQAVISGAFSMTAQAVHL), 327–347 (IYVPVVNYALLLLVVAVVLAF), 356–376 (AYGIAVTTTMLLTTGLVTVVM), 384–404 (LPAVALLGTVFLAVDLSFFGA), and 409–429 (VAAGGWFPLLLGGLIFFLMVT).

It belongs to the HAK/KUP transporter (TC 2.A.72) family.

Its subcellular location is the cell inner membrane. The enzyme catalyses K(+)(in) + H(+)(in) = K(+)(out) + H(+)(out). In terms of biological role, transport of potassium into the cell. Likely operates as a K(+):H(+) symporter. This chain is Probable potassium transport system protein Kup 1, found in Ralstonia nicotianae (strain ATCC BAA-1114 / GMI1000) (Ralstonia solanacearum).